The primary structure comprises 175 residues: Regenerating islet-derived protein 3-alpha (175 aa).

The first 26 residues, 1-26, serve as a signal peptide directing secretion; the sequence is MLPPMALPSVSWMLLSCLMLLSQVQG. The propeptide occupies 27–37; it reads EEPQRELPSAR. Cystine bridges form between cysteine 40/cysteine 51, cysteine 68/cysteine 171, and cysteine 146/cysteine 163. A C-type lectin domain is found at 47-172; that stretch reads YGSHCYALFL…CNVRLPYVCK (126 aa). Zn(2+) contacts are provided by histidine 50 and histidine 107. A sufficient to activate EXTL3 region spans residues 103-118; the sequence is WIGLHDPTQGTEPNGE. The EPN signature appears at 114-116; that stretch reads EPN. Zn(2+)-binding residues include glutamate 121 and histidine 145.

In terms of assembly, forms a hexameric membrane-permeabilizing oligomeric pore on membrane phospholipids. The hexamer is formed by three dimers related by helical symmetry. Forms filaments, filamentation traps pore complexes and limits damage to host cells. Interacts with EXTL3. In terms of processing, proteolytic processing by trypsin removes an inhibitory N-terminal propeptide and is essential for peptidoglycan binding and antibacterial activity. In terms of tissue distribution, expressed by keratinocytes. Highly expressed in epidermal keratinocytes of psoriasis patients (at protein level). Constitutively expressed in intestine. Low expression is found in healthy pancreas. Overexpressed during the acute phase of pancreatitis and in some patients with chronic pancreatitis.

It localises to the secreted. Lipopolysaccharide inhibits pore-forming activity, explaining why is bactericidal for Gram-positive but not Gram-negative bacteria. Bactericidal C-type lectin which acts exclusively against Gram-positive bacteria and mediates bacterial killing by binding to surface-exposed carbohydrate moieties of peptidoglycan. Binds membrane phospholipids and kills bacteria by forming a hexameric membrane-permeabilizing oligomeric pore. Its function is as follows. Acts as a hormone in response to different stimuli like anti-inflammatory signals, such as IL17A, or gut microbiome. Secreted by different cell types to activate its receptor EXTL3 and induce cell specific signaling pathways. Induced by IL17A in keratinocytes, regulates keratinocyte proliferation and differentiation after skin injury via activation of EXTL3-PI3K-AKT signaling pathway. In parallel, inhibits skin inflammation through the inhibition of inflammatory cytokines such as IL6 and TNF. In pancreas, is able to permealize beta-cells membrane and stimulate their proliferation. In terms of biological role, has bacteriostatic activity. This Homo sapiens (Human) protein is Regenerating islet-derived protein 3-alpha.